A 380-amino-acid polypeptide reads, in one-letter code: Cytochrome b (380 aa).

The next 4 membrane-spanning stretches (helical) occupy residues 34–54, 78–99, 114–134, and 179–199; these read FGSL…LLAT, WLIR…YLHI, WNTG…GYVL, and FFAL…IHLT. Heme b is bound by residues His84 and His98. His183 and His197 together coordinate heme b. A ubiquinone is bound at residue His202. 4 helical membrane passes run 227-247, 289-309, 321-341, and 348-368; these read LKDI…ALFS, LGGV…PLLH, FSQF…WVGS, and FIII…LLFP.

The protein belongs to the cytochrome b family. The cytochrome bc1 complex contains 11 subunits: 3 respiratory subunits (MT-CYB, CYC1 and UQCRFS1), 2 core proteins (UQCRC1 and UQCRC2) and 6 low-molecular weight proteins (UQCRH/QCR6, UQCRB/QCR7, UQCRQ/QCR8, UQCR10/QCR9, UQCR11/QCR10 and a cleavage product of UQCRFS1). This cytochrome bc1 complex then forms a dimer. Heme b is required as a cofactor.

It localises to the mitochondrion inner membrane. Functionally, component of the ubiquinol-cytochrome c reductase complex (complex III or cytochrome b-c1 complex) that is part of the mitochondrial respiratory chain. The b-c1 complex mediates electron transfer from ubiquinol to cytochrome c. Contributes to the generation of a proton gradient across the mitochondrial membrane that is then used for ATP synthesis. The protein is Cytochrome b (MT-CYB) of Alca torda (Razorbill).